The chain runs to 169 residues: UPF0316 protein Dde_2502 (169 aa).

The next 3 helical transmembrane spans lie at 1-21 (MITAASLLTALAVFIARLCDV), 38-58 (LAFSVAFFEAVIWVYAVSRVI), and 68-88 (LAFALGFASGTYAGITLEGVF).

It belongs to the UPF0316 family.

It is found in the cell membrane. The protein is UPF0316 protein Dde_2502 of Oleidesulfovibrio alaskensis (strain ATCC BAA-1058 / DSM 17464 / G20) (Desulfovibrio alaskensis).